Reading from the N-terminus, the 270-residue chain is Phosphatidylinositol transfer protein alpha isoform (270 aa).

The a 1,2-diacyl-sn-glycero-3-phospho-(1D-myo-inositol) site is built by threonine 58, lysine 60, glutamate 85, asparagine 89, threonine 96, and lysine 194. At lysine 215 the chain carries N6-acetyllysine. Over residues 250–263 the composition is skewed to basic and acidic residues; that stretch reads TKRQLDEMRQKDPV. The disordered stretch occupies residues 250–270; the sequence is TKRQLDEMRQKDPVKGMTADD.

The protein belongs to the PtdIns transfer protein family. PI transfer class I subfamily. Post-translationally, phosphorylated by PKC in a calcium and phosphatidylserine-dependent manner.

The protein resides in the cytoplasm. The protein localises to the nucleus. It carries out the reaction a 1,2-diacyl-sn-glycero-3-phosphocholine(in) = a 1,2-diacyl-sn-glycero-3-phosphocholine(out). The enzyme catalyses a 1,2-diacyl-sn-glycero-3-phospho-(1D-myo-inositol)(in) = a 1,2-diacyl-sn-glycero-3-phospho-(1D-myo-inositol)(out). Its function is as follows. Catalyzes the transfer of phosphatidylinositol (PI) and phosphatidylcholine (PC) between membranes. Shows a preference for PI and PC containing shorter saturated or monosaturated acyl chains at the sn-1 and sn-2 positions. Preference order for PC is C16:1 &gt; C16:0 &gt; C18:1 &gt; C18:0 &gt; C20:4 and for PI is C16:1 &gt; C16:0 &gt; C18:1 &gt; C18:0 &gt; C20:4 &gt; C20:3. This chain is Phosphatidylinositol transfer protein alpha isoform (PITPNA), found in Oryctolagus cuniculus (Rabbit).